The chain runs to 225 residues: tRNA 2'-phosphotransferase 1 (225 aa).

The disordered stretch occupies residues 1-21 (MDCETRGRGRRGRGNRNEESR).

Belongs to the KptA/TPT1 family.

It carries out the reaction 2'-phospho-[ligated tRNA] + NAD(+) = mature tRNA + ADP-alpha-D-ribose 1'',2''-cyclic phosphate + nicotinamide. Functionally, catalyzes the last step of tRNA splicing, the transfer of the splice junction 2'-phosphate from ligated tRNA to NAD to produce ADP-ribose 1''-2'' cyclic phosphate. This is tRNA 2'-phosphotransferase 1 (trpt1) from Danio rerio (Zebrafish).